We begin with the raw amino-acid sequence, 335 residues long: GTPase Obg (335 aa).

Residues 4–162 enclose the Obg domain; it reads GNFVDYTKIY…ADIVLELKVL (159 aa). Positions 163-332 constitute an OBG-type G domain; it reads ADVGLVGFPN…LKDKLWAMLN (170 aa). Residues 169 to 176, 194 to 198, 216 to 219, 283 to 286, and 313 to 315 each bind GTP; these read GFPNAGKS, FTTLK, DIPG, SKCD, and SSI. Ser176 and Thr196 together coordinate Mg(2+).

This sequence belongs to the TRAFAC class OBG-HflX-like GTPase superfamily. OBG GTPase family. As to quaternary structure, monomer. Mg(2+) serves as cofactor.

The protein resides in the cytoplasm. Functionally, an essential GTPase which binds GTP, GDP and possibly (p)ppGpp with moderate affinity, with high nucleotide exchange rates and a fairly low GTP hydrolysis rate. Plays a role in control of the cell cycle, stress response, ribosome biogenesis and in those bacteria that undergo differentiation, in morphogenesis control. This is GTPase Obg from Flavobacterium psychrophilum (strain ATCC 49511 / DSM 21280 / CIP 103535 / JIP02/86).